A 139-amino-acid chain; its full sequence is Low molecular weight protein-tyrosine-phosphatase PtpB (139 aa).

Cysteine 7 acts as the Nucleophile in catalysis. Arginine 13 is an active-site residue. The active-site Proton donor is aspartate 111.

This sequence belongs to the low molecular weight phosphotyrosine protein phosphatase family.

It catalyses the reaction O-phospho-L-tyrosyl-[protein] + H2O = L-tyrosyl-[protein] + phosphate. Its activity is regulated as follows. Inhibited by N-ethylmaleimide and sodium orthovanadate. Functionally, dephosphorylates the phosphotyrosine-containing proteins. This Staphylococcus aureus protein is Low molecular weight protein-tyrosine-phosphatase PtpB (ptpB).